A 262-amino-acid chain; its full sequence is Histone chaperone cia1 (262 aa).

Residues 157–262 (IQWDNPDFDD…KPEEKPETSQ (106 aa)) are disordered. Coiled-coil stretches lie at residues 173–196 (DADE…EGEG) and 223–253 (KGSE…AEEK). Composition is skewed to acidic residues over residues 173–219 (DADE…GEGE) and 226–242 (EEEE…EEES). The segment covering 250–262 (AEEKPEEKPETSQ) has biased composition (basic and acidic residues).

The protein belongs to the ASF1 family. Interacts with histone H3 and histone H4.

It localises to the nucleus. Functionally, histone chaperone that facilitates histone deposition and histone exchange and removal during nucleosome assembly and disassembly. The chain is Histone chaperone cia1 (cia1) from Schizosaccharomyces pombe (strain 972 / ATCC 24843) (Fission yeast).